A 70-amino-acid chain; its full sequence is Large ribosomal subunit protein uL29 (70 aa).

Belongs to the universal ribosomal protein uL29 family.

This is Large ribosomal subunit protein uL29 from Thermosynechococcus vestitus (strain NIES-2133 / IAM M-273 / BP-1).